The following is a 200-amino-acid chain: Putative 3-methyladenine DNA glycosylase (200 aa).

This sequence belongs to the DNA glycosylase MPG family.

This is Putative 3-methyladenine DNA glycosylase from Rhodopseudomonas palustris (strain BisB18).